Consider the following 342-residue polypeptide: S-adenosylmethionine:tRNA ribosyltransferase-isomerase (342 aa).

This sequence belongs to the QueA family. In terms of assembly, monomer.

The protein localises to the cytoplasm. The catalysed reaction is 7-aminomethyl-7-carbaguanosine(34) in tRNA + S-adenosyl-L-methionine = epoxyqueuosine(34) in tRNA + adenine + L-methionine + 2 H(+). Its pathway is tRNA modification; tRNA-queuosine biosynthesis. Functionally, transfers and isomerizes the ribose moiety from AdoMet to the 7-aminomethyl group of 7-deazaguanine (preQ1-tRNA) to give epoxyqueuosine (oQ-tRNA). This Oceanobacillus iheyensis (strain DSM 14371 / CIP 107618 / JCM 11309 / KCTC 3954 / HTE831) protein is S-adenosylmethionine:tRNA ribosyltransferase-isomerase.